The sequence spans 83 residues: Sulfur carrier protein TusA (83 aa).

Catalysis depends on cysteine 19, which acts as the Cysteine persulfide intermediate.

The protein belongs to the sulfur carrier protein TusA family.

The protein localises to the cytoplasm. Functionally, sulfur carrier protein which probably makes part of a sulfur-relay system. This chain is Sulfur carrier protein TusA, found in Aliivibrio fischeri (strain ATCC 700601 / ES114) (Vibrio fischeri).